A 301-amino-acid chain; its full sequence is Mycothiol acetyltransferase (301 aa).

N-acetyltransferase domains are found at residues 7 to 150 (VDWQ…PPVD) and 152 to 301 (VRFA…AVEG). Position 39 (D39) interacts with 1D-myo-inositol 2-(L-cysteinylamino)-2-deoxy-alpha-D-glucopyranoside. Acetyl-CoA is bound by residues 80 to 82 (LVV) and 88 to 93 (RRGIGS). E179, K220, and E228 together coordinate 1D-myo-inositol 2-(L-cysteinylamino)-2-deoxy-alpha-D-glucopyranoside. 232 to 234 (VGV) is a binding site for acetyl-CoA. Y271 contacts 1D-myo-inositol 2-(L-cysteinylamino)-2-deoxy-alpha-D-glucopyranoside. 276-281 (NTAAVK) serves as a coordination point for acetyl-CoA.

It belongs to the acetyltransferase family. MshD subfamily. In terms of assembly, monomer.

It carries out the reaction 1D-myo-inositol 2-(L-cysteinylamino)-2-deoxy-alpha-D-glucopyranoside + acetyl-CoA = mycothiol + CoA + H(+). In terms of biological role, catalyzes the transfer of acetyl from acetyl-CoA to desacetylmycothiol (Cys-GlcN-Ins) to form mycothiol. The protein is Mycothiol acetyltransferase of Mycolicibacterium vanbaalenii (strain DSM 7251 / JCM 13017 / BCRC 16820 / KCTC 9966 / NRRL B-24157 / PYR-1) (Mycobacterium vanbaalenii).